The chain runs to 113 residues: UPF0102 protein Dgeo_1894 (113 aa).

It belongs to the UPF0102 family.

The protein is UPF0102 protein Dgeo_1894 of Deinococcus geothermalis (strain DSM 11300 / CIP 105573 / AG-3a).